The chain runs to 139 residues: Small ribosomal subunit protein uS12 (139 aa).

A disordered region spans residues 1–21 (MSTVSQLIKKRRSSKTSKTKA). The span at 8–18 (IKKRRSSKTSK) shows a compositional bias: basic residues.

Belongs to the universal ribosomal protein uS12 family. As to quaternary structure, part of the 30S ribosomal subunit. Contacts proteins S8 and S17. May interact with IF1 in the 30S initiation complex.

Functionally, with S4 and S5 plays an important role in translational accuracy. Interacts with and stabilizes bases of the 16S rRNA that are involved in tRNA selection in the A site and with the mRNA backbone. Located at the interface of the 30S and 50S subunits, it traverses the body of the 30S subunit contacting proteins on the other side and probably holding the rRNA structure together. The combined cluster of proteins S8, S12 and S17 appears to hold together the shoulder and platform of the 30S subunit. The polypeptide is Small ribosomal subunit protein uS12 (Onion yellows phytoplasma (strain OY-M)).